We begin with the raw amino-acid sequence, 82 residues long: MSQAGAQEAPIKKKRPPVKDEDLKGARGNLTKNQEIKSKTYQVMRECEQAGSAAPSVFSRTRTGTETVFEKPKAGPTKSVFG.

2 disordered regions span residues 1–33 and 49–82; these read MSQA…LTKN and QAGS…SVFG. A Phosphoserine modification is found at Ser2. Positions 10 to 18 match the Nuclear localization signal motif; sequence PIKKKRPPV.

The protein belongs to the MUSTN1 family. In terms of tissue distribution, expression in skeletal muscle is reduced during limb unloading but increases during the active recovery phase that follows.

The protein resides in the nucleus. The protein localises to the cytoplasm. Its subcellular location is the secreted. It localises to the extracellular space. Required for chondrocyte development and proliferation. Plays a role in myoblast differentiation and fusion. Modulates skeletal muscle extracellular matrix composition. Plays a role in skeletal muscle function. Plays a role in glucose homeostasis. This is Musculoskeletal embryonic nuclear protein 1 (MUSTN1) from Homo sapiens (Human).